Consider the following 473-residue polypeptide: FAD-dependent oxidoreductase dpasF (473 aa).

The first 21 residues, Met1 to Ala21, serve as a signal peptide directing secretion. 7 N-linked (GlcNAc...) asparagine glycosylation sites follow: Asn26, Asn54, Asn92, Asn133, Asn185, Asn276, and Asn401.

It belongs to the beta-cyclopiazonate dehydrogenase family. The cofactor is FAD.

Its pathway is secondary metabolite biosynthesis; terpenoid biosynthesis. In terms of biological role, FAD-dependent oxidoreductase; part of the gene cluster that mediates the biosynthesis of the diterpenoid pyrones subglutinols A and B. The first step of the pathway is the synthesis of the alpha-pyrone moiety by the polyketide synthase dpasA via condensation of one acetyl-CoA starter unit with 3 malonyl-CoA units and 2 methylations. The alpha-pyrone is then combined with geranylgeranyl pyrophosphate (GGPP) formed by the GGPP synthase dpasD through the action of the prenyltransferase dpasC to yield a linear alpha-pyrone diterpenoid. Subsequent steps in the diterpenoid pyrone biosynthetic pathway involve the decalin core formation, which is initiated by the epoxidation of the C10-C11 olefin by the FAD-dependent oxidoreductase dpasE, and is followed by a cyclization cascade catalyzed by the terpene cyclase dpasB. The FAD-linked oxidoreductase dpasF is then involved in tetrahydrofuran (THF) ring formation at the C5 unit to complete the formation of subglutinols A and B. DpasF possesses also an additional catalytic ability of multi-step oxidations to generate a new DDP analog with an enone system at the C5 named FDDP A. The sequence is that of FAD-dependent oxidoreductase dpasF from Apiospora sacchari (Arthrinium sacchari).